A 118-amino-acid chain; its full sequence is Large ribosomal subunit protein uL18 (118 aa).

The tract at residues 1-24 (MITKPDKNKIRQKRHRRVRGKLSG) is disordered. Basic residues predominate over residues 10 to 20 (IRQKRHRRVRG).

This sequence belongs to the universal ribosomal protein uL18 family. Part of the 50S ribosomal subunit; part of the 5S rRNA/L5/L18/L25 subcomplex. Contacts the 5S and 23S rRNAs.

In terms of biological role, this is one of the proteins that bind and probably mediate the attachment of the 5S RNA into the large ribosomal subunit, where it forms part of the central protuberance. The polypeptide is Large ribosomal subunit protein uL18 (Streptococcus sanguinis (strain SK36)).